We begin with the raw amino-acid sequence, 342 residues long: Glutamyl endopeptidase (342 aa).

The signal sequence occupies residues 1–29 (MKGKFLKVSSLFVATLTTATLVSSPAANA). A propeptide spanning residues 30 to 68 (LSSKAMDNHPQQTQSSKQQTPKIKKGGNLKPLEQREHAN) is cleaved from the precursor. The segment at 33–63 (KAMDNHPQQTQSSKQQTPKIKKGGNLKPLEQ) is disordered. The segment covering 39–50 (PQQTQSSKQQTP) has biased composition (low complexity). Active-site charge relay system residues include H119, D161, and S237. A disordered region spans residues 283–342 (FANDDQPNNPDNPDNPNNPDNPNNPDNPNNPDEPNNPDNPNNPDNPDNGDNNNSDNPDAA). Residues 286-342 (DDQPNNPDNPDNPNNPDNPNNPDNPNNPDEPNNPDNPNNPDNPDNGDNNNSDNPDAA) are compositionally biased toward low complexity. Repeat copies occupy residues 289–291 (PNN), 292–294 (PDN), 295–297 (PDN), 298–300 (PNN), 301–303 (PDN), 304–306 (PNN), 307–309 (PDN), 310–312 (PNN), 316–318 (PNN), 319–321 (PDN), 322–324 (PNN), 325–327 (PDN), and 328–330 (PDN). The segment at 289-330 (PNNPDNPDNPNNPDNPNNPDNPNNPDEPNNPDNPNNPDNPDN) is 13 X 3 AA repeats of P-[DN]-N.

The protein belongs to the peptidase S1B family. In terms of processing, proteolytically cleaved by aureolysin (aur). This cleavage leads to the activation of SspA.

The protein localises to the secreted. It carries out the reaction Preferential cleavage: Glu-|-Xaa, Asp-|-Xaa.. In terms of biological role, preferentially cleaves peptide bonds on the carboxyl-terminal side of aspartate and glutamate. Along with other extracellular proteases it is involved in colonization and infection of human tissues. Required for proteolytic maturation of thiol protease SspB and inactivation of SspC, an inhibitor of SspB. It is the most important protease for degradation of fibronectin-binding protein (FnBP) and surface protein A, which are involved in adherence to host cells. May also protect bacteria against host defense mechanism by cleaving the immunoglobulin classes IgG, IgA and IgM. May be involved in the stability of secreted lipases. This is Glutamyl endopeptidase (sspA) from Staphylococcus aureus (strain Mu50 / ATCC 700699).